The sequence spans 364 residues: UDP-N-acetylenolpyruvoylglucosamine reductase (364 aa).

Positions 30-196 (LGGPATRLIT…LRVRFELEDA (167 aa)) constitute an FAD-binding PCMH-type domain. Arginine 173 is a catalytic residue. Serine 252 (proton donor) is an active-site residue. Glutamate 356 is an active-site residue.

This sequence belongs to the MurB family. It depends on FAD as a cofactor.

It localises to the cytoplasm. It carries out the reaction UDP-N-acetyl-alpha-D-muramate + NADP(+) = UDP-N-acetyl-3-O-(1-carboxyvinyl)-alpha-D-glucosamine + NADPH + H(+). Its pathway is cell wall biogenesis; peptidoglycan biosynthesis. Cell wall formation. In Streptomyces avermitilis (strain ATCC 31267 / DSM 46492 / JCM 5070 / NBRC 14893 / NCIMB 12804 / NRRL 8165 / MA-4680), this protein is UDP-N-acetylenolpyruvoylglucosamine reductase.